Reading from the N-terminus, the 427-residue chain is MKLRTNAKGLRGSLRVPGDKSISHRSIIFGSLAKGVTKVHDILRGEDVLSTMQVFREMGVQIEDKGDLVEIHGCGFDGLQEPQRPLDMGNSGTSMRLIAGVLAGQNFSAQMVGDDSLSKRPMDRISLPLRRMGVEIAGQTERDLPPLTIHGNPNLKPIQYQLPIASAQVKSALIFAALQAQGESLIIEKDLTRNHTEDMLLQFGGQLKVDGKEIRVAGKQELQAQEVVVPGDISSAAFWLVAGLIVPSSKITLTNVGINETRTGILDVIQAMGGKLSVSEVDEVVKSATITVESSDLYGTEISGELIPRLIDELPIIALLATQAEGQTLIQDAEELKVKETDRIQVVADALNSMGADIQPTADGMIIQGKTSLKGASVHTYGDHRIGMMTAIAALLVKDGSVELSRAEAINTSYPDFFAHLEDLANV.

The 3-phosphoshikimate site is built by Lys20, Ser21, and Arg25. Lys20 is a phosphoenolpyruvate binding site. Phosphoenolpyruvate contacts are provided by Gly92 and Arg120. Positions 166, 168, 312, and 339 each coordinate 3-phosphoshikimate. Residue Gln168 coordinates phosphoenolpyruvate. The active-site Proton acceptor is Asp312. Residues Arg343 and Arg385 each contribute to the phosphoenolpyruvate site.

The protein belongs to the EPSP synthase family. Monomer.

The protein resides in the cytoplasm. It carries out the reaction 3-phosphoshikimate + phosphoenolpyruvate = 5-O-(1-carboxyvinyl)-3-phosphoshikimate + phosphate. It participates in metabolic intermediate biosynthesis; chorismate biosynthesis; chorismate from D-erythrose 4-phosphate and phosphoenolpyruvate: step 6/7. In terms of biological role, catalyzes the transfer of the enolpyruvyl moiety of phosphoenolpyruvate (PEP) to the 5-hydroxyl of shikimate-3-phosphate (S3P) to produce enolpyruvyl shikimate-3-phosphate and inorganic phosphate. The protein is 3-phosphoshikimate 1-carboxyvinyltransferase of Streptococcus gordonii (strain Challis / ATCC 35105 / BCRC 15272 / CH1 / DL1 / V288).